The chain runs to 509 residues: Zinc finger CCCH-type with G patch domain-containing protein (509 aa).

The segment at 155 to 178 (PCNYYLEGECRFDEIRCRYSHGAL) adopts a C3H1-type zinc-finger fold. Residues 253 to 277 (EEDGLTSEDSSSSPHDESSDEIDSD) form a disordered region. Positions 310 to 356 (TRGIGSKLMEKMGYIHGTGLGSEGRGIVTPVSAQILPQGRSLDACME) constitute a G-patch domain. The segment at 409 to 430 (GGESRHQGDQAAKKAKTNDLQQ) is disordered. Positions 411–420 (ESRHQGDQAA) are enriched in basic and acidic residues.

It localises to the nucleus. Its function is as follows. Transcription repressor. This Drosophila persimilis (Fruit fly) protein is Zinc finger CCCH-type with G patch domain-containing protein.